The sequence spans 513 residues: Flavonoid 3',5'-hydroxylase (513 aa).

Cys446 provides a ligand contact to heme.

It belongs to the cytochrome P450 family. The cofactor is heme. As to expression, hypocotyl tissues.

It catalyses the reaction a 3',5'-unsubstituted flavanone + 2 reduced [NADPH--hemoprotein reductase] + 2 O2 = a 3',5'-dihydroxyflavanone + 2 oxidized [NADPH--hemoprotein reductase] + 2 H2O + 2 H(+). Its pathway is pigment biosynthesis; anthocyanin biosynthesis. Its function is as follows. Catalyzes the 3'5'-hydroxylation of naringenin and eriodictyol to form 5,7,3,'4',5'-pentahydroxyflavanone and 3',5'-hydroxylation of dihydrokaempferol and dihydroquercetin to form dihydromyricetin. In Solanum melongena (Eggplant), this protein is Flavonoid 3',5'-hydroxylase (CYP75A2).